Reading from the N-terminus, the 303-residue chain is Inner kinetochore subunit mal2 (303 aa).

The protein belongs to the CENP-O/MCM21 family. In terms of assembly, component of the heterotetrameric kinetochore subcomplex COMA, which consists of fta2, fta7, mal2 and mis17. The COMA subcomplex is part of a larger constitutive centromere-associated network (CCAN) (also known as central kinetochore Sim4 complex in fission yeast), which is composed of at least cnl2, cnp3, cnp20, fta1, fta2, fta3, fta4, fta6, fta7, mal2, mhf1, mhf2, mis6, mis15, mis17, sim4 and wip1.

It is found in the nucleus. The protein resides in the chromosome. Its subcellular location is the centromere. The protein localises to the kinetochore. Functionally, component of the kinetochore, a multiprotein complex that assembles on centromeric DNA and attaches chromosomes to spindle microtubules, mediating chromosome segregation and sister chromatid segregation during meiosis and mitosis. Component of the inner kinetochore COMA complex, which connects centromere-associated proteins and the outer kinetochore. COMA interacts with other inner kinetochore proteins to form the inner kinetochore constitutive centromere-associated network (CCAN), which serves as a structural platform for outer kinetochore assembly. The protein is Inner kinetochore subunit mal2 (mal2) of Schizosaccharomyces pombe (strain 972 / ATCC 24843) (Fission yeast).